A 31-amino-acid chain; its full sequence is Cytochrome b6-f complex subunit 6 (31 aa).

Residues 3-23 traverse the membrane as a helical segment; the sequence is IITSYFGFLLTALTIASALFI.

Belongs to the PetL family. In terms of assembly, the 4 large subunits of the cytochrome b6-f complex are cytochrome b6, subunit IV (17 kDa polypeptide, PetD), cytochrome f and the Rieske protein, while the 4 small subunits are PetG, PetL, PetM and PetN. The complex functions as a dimer.

It is found in the plastid. It localises to the chloroplast thylakoid membrane. Its function is as follows. Component of the cytochrome b6-f complex, which mediates electron transfer between photosystem II (PSII) and photosystem I (PSI), cyclic electron flow around PSI, and state transitions. PetL is important for photoautotrophic growth as well as for electron transfer efficiency and stability of the cytochrome b6-f complex. The sequence is that of Cytochrome b6-f complex subunit 6 from Helianthus annuus (Common sunflower).